Here is a 496-residue protein sequence, read N- to C-terminus: Polyphosphate:AMP phosphotransferase (496 aa).

2 PPK2 regions span residues 11 to 234 and 269 to 495; these read IDKD…LQAA and LDKD…YKKD.

It belongs to the polyphosphate kinase 2 (PPK2) family. Class II subfamily. Homodimer. Requires Mg(2+) as cofactor.

It carries out the reaction [phosphate](n) + ADP = [phosphate](n+1) + AMP. Functionally, uses inorganic polyphosphate (polyP) as a donor to convert AMP to ADP. Can also convert GMP to GDP, with lower efficiency. Cannot dephosphorylate ADP in the presence of polyP. This is Polyphosphate:AMP phosphotransferase from Pseudomonas aeruginosa (strain ATCC 15692 / DSM 22644 / CIP 104116 / JCM 14847 / LMG 12228 / 1C / PRS 101 / PAO1).